The sequence spans 263 residues: MAWRYSQLLLVPVQLVFLASVCCPGVWGSTVSEELHRMVGQSLSVQCQYKPKEESYVLKTWCRQTAPSKCTRVVTTSEPRKAARELQHTIWDDPEAGFFNITMTQLTEDDSAFYWCGPYYPSLREVTVLRNISLVVSPAPSTLPSQTIAPLPESTATIFMPFPVLTTSPEETTDSSINGTGHRNQSSSSPGWTSPGLLVSVQYGLLLLKALMLSVFCVLLCWRSGQGREYMAETMELSKLPHISKSLDTVSHISGYEKKANWY.

An N-terminal signal peptide occupies residues 1-28; the sequence is MAWRYSQLLLVPVQLVFLASVCCPGVWG. One can recognise an Ig-like V-type domain in the interval 29-132; the sequence is STVSEELHRM…LREVTVLRNI (104 aa). The Extracellular portion of the chain corresponds to 29 to 200; sequence STVSEELHRM…GWTSPGLLVS (172 aa). Cys47 and Cys116 are disulfide-bonded. Asn100 carries an N-linked (GlcNAc...) asparagine glycan. Residues 168–191 form a disordered region; it reads SPEETTDSSINGTGHRNQSSSSPG. Residues 201 to 221 form a helical membrane-spanning segment; that stretch reads VQYGLLLLKALMLSVFCVLLC. The Cytoplasmic segment spans residues 222–263; the sequence is WRSGQGREYMAETMELSKLPHISKSLDTVSHISGYEKKANWY.

As to quaternary structure, interacts with TYROBP/DAP12. In terms of tissue distribution, predominantly expressed in spleen, with highest levels on selected populations of macrophages, including red pulp macrophages, and on subsets of dendritic cells (DC), mostly on CD8alpha(+) DC (at protein level). Also expressed on blood and spleen Ly6C(low) monocytes (at protein level). Not expressed on lymphocytes or granulocytes (at protein level).

The protein resides in the cell membrane. Positively regulates Toll-like receptor signaling via TLR7, TLR9 and TLR13 in neutrophils and splenic macrophages. Regulates TLR7 signaling by controlling ligand-induced recruitment of TLR7 from the endoplasmic reticulum to endosomes and lysosomes. Positively regulates Toll-like receptor TLR9-induced production of inflammatory cytokines but is dispensable for IFNB1 production. Involved in the anti-viral response to several viruses including influenza virus, vesicular stomatitis virus and cytomegalovirus. Binds to late apoptotic, and necrotic cells, but not living or early apoptotic cells, but is not essential for uptake of dying cells by dendritic cells (DCs). Does not bind nucleic acids. May participate in antigen presentation. This is Trem-like transcript 4 protein (Treml4) from Mus musculus (Mouse).